The chain runs to 663 residues: Polyunsaturated fatty acid lipoxygenase ALOX15 (663 aa).

The PLAT domain maps to 2–115; sequence GVYRIRVSTG…ILSLPEGTGC (114 aa). The Lipoxygenase domain maps to 116–663; the sequence is TVVEDSQGLF…PSMVENSVAI (548 aa). At Ser-149 the chain carries Phosphoserine. Fe cation-binding residues include His-361, His-366, His-541, His-545, and Ile-663.

The protein belongs to the lipoxygenase family. As to quaternary structure, interacts with PEBP1; in response to IL13/interleukin-13, prevents the interaction of PEBP1 with RAF1 to activate the ERK signaling cascade. The cofactor is Fe cation. In terms of tissue distribution, detected in leukocytes, lung and aorta.

Its subcellular location is the cytoplasm. It localises to the cytosol. It is found in the cell membrane. The protein localises to the lipid droplet. The enzyme catalyses (5Z,8Z,11Z,14Z)-eicosatetraenoate + O2 = (12S)-hydroperoxy-(5Z,8Z,10E,14Z)-eicosatetraenoate. It carries out the reaction (5Z,8Z,11Z,14Z)-eicosatetraenoate + O2 = (15S)-hydroperoxy-(5Z,8Z,11Z,13E)-eicosatetraenoate. It catalyses the reaction (9Z,12Z)-octadecadienoate + O2 = (13S)-hydroperoxy-(9Z,11E)-octadecadienoate. The catalysed reaction is (12S)-hydroperoxy-(5Z,8Z,10E,14Z)-eicosatetraenoate = (8S)-hydroxy-(11S,12S)-epoxy-(5Z,9E,14Z)-eicosatrienoate. The enzyme catalyses (5Z,8Z,11Z,14Z)-eicosatetraenoate + 2 O2 = (14R,15S)-dihydroperoxy-(5Z,8Z,10E,12E)-eicosatetraenoate. It carries out the reaction (5Z,8Z,11Z,14Z)-eicosatetraenoate + 2 O2 = (8S,15S)-dihydroperoxy-(5Z,9E,11Z,13E)-eicosatetraenoate. It catalyses the reaction (14S,15R)-epoxy-(5Z,8Z,11Z)-eicosatrienoate + O2 = (8S)-hydroperoxy-(14S,15R)-epoxy-(5Z,9E,11Z)-eicosatrienoate. The catalysed reaction is (14S,15R)-epoxy-(5Z,8Z,11Z)-eicosatrienoate + O2 = (12S)-hydroperoxy-(14S,15R)-epoxy-(5Z,8Z,10E)-eicosatrienoate. The enzyme catalyses (14R,15S)-epoxy-(5Z,8Z,11Z)-eicosatrienoate + O2 = (5S)-hydroperoxy-(14R,15S)-epoxy-(6E,8Z,11Z)-eicosatrienoate. It carries out the reaction (14R,15S)-epoxy-(5Z,8Z,11Z)-eicosatrienoate + O2 = (12S)-hydroperoxy-(14R,15S)-epoxy-(5Z,8Z,10E)-eicosatrienoate. It catalyses the reaction (15R)-hydroperoxy-(5Z,8Z,11Z,13E)-eicosatetraenoate = 15-oxo-(5Z,8Z,11Z,13E)-eicosatetraenoate + H2O. The catalysed reaction is (15S)-hydroperoxy-(5Z,8Z,11Z,13E)-eicosatetraenoate = (14S,15S)-epoxy-(5Z,8Z,10E,12E)-eicosatetraenoate + H2O. The enzyme catalyses (4Z,7Z,10Z,13Z,16Z)-docosapentaenoate + O2 = 14-hydroperoxy-(4Z,7Z,10Z,12E,16Z)-docosapentaenoate. It carries out the reaction (7Z,10Z,13Z,16Z,19Z)-docosapentaenoate + O2 = 14-hydroperoxy-(7Z,10Z,12E,16Z,19Z)-docosapentaenoate. It catalyses the reaction (4Z,7Z,10Z,13Z,16Z,19Z)-docosahexaenoate + O2 = (14S)-hydroperoxy-(4Z,7Z,10Z,12E,16Z,19Z)-docosahexaenoate. The catalysed reaction is (4Z,7Z,10Z,13Z,16Z,19Z)-docosahexaenoate + O2 = (17S)-hydroperoxy-(4Z,7Z,10Z,13Z,15E,19Z)-docosahexaenoate. The enzyme catalyses (7S)-hydroperoxy-(4Z,8E,10Z,13Z,16Z,19Z)-docosahexaenoate + O2 = (7S,14S)-dihydroperoxy-(4Z,8E,10Z,12E,16Z,19Z)-docosahexaenoate. It carries out the reaction (7S)-hydroperoxy-(4Z,8E,10Z,13Z,16Z,19Z)-docosahexaenoate + O2 = (7S,17S)-dihydroperoxy-(4Z,8E,10Z,13Z,15E,19Z)-docosahexaenoate. It catalyses the reaction (4Z,7Z,10Z,13Z,16Z,19Z)-docosahexaenoate + O2 = (11S)-hydroperoxy-(4Z,7Z,9E,13Z,16Z,19Z)-docosahexaenoate. The catalysed reaction is N-(5Z,8Z,11Z,14Z)-eicosatetraenoyl-taurine + O2 = N-(12S)-hydroperoxy-(5Z,8Z,10E,14Z)-eicosatetraenoyl-taurine. The enzyme catalyses N-(5Z,8Z,11Z,14Z)-eicosatetraenoyl-gamma-aminobutanoate + O2 = N-(12S)-hydroperoxy-(5Z,8Z,10E,14Z)-eicosatetraenoyl-gamma-aminobutanoate. It carries out the reaction N-(5Z,8Z,11Z,14Z)-eicosatetraenoyl-glycine + O2 = N-(12S)-hydroperoxy-(5Z,8Z,10E,14Z)-eicosatetraenoyl-glycine. It catalyses the reaction N-(5Z,8Z,11Z,14Z)-eicosatetraenoyl-L-alanine + O2 = N-(12S)-hydroperoxy-(5Z,8Z,10E,14Z)-eicosatetraenoyl-alanine. The catalysed reaction is N-(5Z,8Z,11Z,14Z)-eicosatetraenoyl-taurine + O2 = N-(15S)-hydroperoxy-(5Z,8Z,11Z,13E)-eicosatetraenoyl-taurine. The enzyme catalyses N-(5Z,8Z,11Z,14Z)-eicosatetraenoyl-gamma-aminobutanoate + O2 = N-(15S)-hydroperoxy-(5Z,8Z,11Z,13E)-eicosatetraenoyl-gamma-aminobutanoate. It carries out the reaction N-(5Z,8Z,11Z,14Z)-eicosatetraenoyl-glycine + O2 = N-(15S)-hydroperoxy-(5Z,8Z,11Z,13E)-eicosatetraenoyl-glycine. It catalyses the reaction N-(5Z,8Z,11Z,14Z)-eicosatetraenoyl-L-alanine + O2 = N-(15S)-hydroperoxy-(5Z,8Z,11Z,13E)-eicosatetraenoyl-alanine. Its pathway is lipid metabolism; hydroperoxy eicosatetraenoic acid biosynthesis. Non-heme iron-containing dioxygenase that catalyzes the stereo-specific peroxidation of free and esterified polyunsaturated fatty acids generating a spectrum of bioactive lipid mediators. It inserts peroxyl groups at C12 or C15 of arachidonate ((5Z,8Z,11Z,14Z)-eicosatetraenoate) producing both 12-hydroperoxyeicosatetraenoate/12-HPETE and 15-hydroperoxyeicosatetraenoate/15-HPETE. It may then act on 12-HPETE to produce hepoxilins, which may show pro-inflammatory properties. Can also peroxidize linoleate ((9Z,12Z)-octadecadienoate) to 13-hydroperoxyoctadecadienoate. May participate in the sequential oxidations of DHA ((4Z,7Z,10Z,13Z,16Z,19Z)-docosahexaenoate) to generate specialized pro-resolving mediators (SPMs)like resolvin D5 ((7S,17S)-diHPDHA) and (7S,14S)-diHPDHA, that actively down-regulate the immune response and have anti-aggregation properties with platelets. Can convert epoxy fatty acids to hydroperoxy-epoxides derivatives followed by an intramolecular nucleophilic substitution leading to the formation of monocyclic endoperoxides. Plays an important role during the maintenance of self-tolerance by peroxidizing membrane-bound phosphatidylethanolamine which can then signal the sorting process for clearance of apoptotic cells during inflammation and prevent an autoimmune response. In addition to its role in the immune and inflammatory responses, this enzyme may play a role in epithelial wound healing in the cornea through production of lipoxin A4 (LXA(4)) and docosahexaenoic acid-derived neuroprotectin D1 (NPD1; 10R,17S-HDHA), both lipid autacoids exhibit anti-inflammatory and neuroprotective properties. Furthermore, it may regulate actin polymerization which is crucial for several biological processes such as the phagocytosis of apoptotic cells. It is also implicated in the generation of endogenous ligands for peroxisome proliferator activated receptor (PPAR-gamma), hence modulating macrophage development and function. It may also exert a negative effect on skeletal development by regulating bone mass through this pathway. As well as participates in ER stress and downstream inflammation in adipocytes, pancreatic islets, and liver. Finally, it is also involved in the cellular response to IL13/interleukin-13. The sequence is that of Polyunsaturated fatty acid lipoxygenase ALOX15 from Rattus norvegicus (Rat).